Reading from the N-terminus, the 302-residue chain is Sulfate adenylyltransferase subunit 2 (302 aa).

The protein belongs to the PAPS reductase family. CysD subfamily. Heterodimer composed of CysD, the smaller subunit, and CysN.

The catalysed reaction is sulfate + ATP + H(+) = adenosine 5'-phosphosulfate + diphosphate. It participates in sulfur metabolism; hydrogen sulfide biosynthesis; sulfite from sulfate: step 1/3. Its function is as follows. With CysN forms the ATP sulfurylase (ATPS) that catalyzes the adenylation of sulfate producing adenosine 5'-phosphosulfate (APS) and diphosphate, the first enzymatic step in sulfur assimilation pathway. APS synthesis involves the formation of a high-energy phosphoric-sulfuric acid anhydride bond driven by GTP hydrolysis by CysN coupled to ATP hydrolysis by CysD. The chain is Sulfate adenylyltransferase subunit 2 from Escherichia coli O9:H4 (strain HS).